Reading from the N-terminus, the 301-residue chain is Probable alpha-L-glutamate ligase (301 aa).

An ATP-grasp domain is found at 104 to 287 (LQLLSRKGIG…VADEIIRFIE (184 aa)). ATP contacts are provided by residues Lys141, 178-179 (EF), Asp187, and 211-213 (RSN). Positions 248, 260, and 262 each coordinate Mg(2+). Residues Asp248, Glu260, and Asn262 each coordinate Mn(2+).

This sequence belongs to the RimK family. The cofactor is Mg(2+). Mn(2+) serves as cofactor.

This chain is Probable alpha-L-glutamate ligase, found in Syntrophotalea carbinolica (strain DSM 2380 / NBRC 103641 / GraBd1) (Pelobacter carbinolicus).